The chain runs to 116 residues: Iron-sulfur cluster insertion protein ErpA (116 aa).

Residues Cys-44, Cys-108, and Cys-110 each contribute to the iron-sulfur cluster site.

The protein belongs to the HesB/IscA family. Homodimer. Iron-sulfur cluster is required as a cofactor.

Functionally, required for insertion of 4Fe-4S clusters for at least IspG. The chain is Iron-sulfur cluster insertion protein ErpA from Nitrosococcus oceani (strain ATCC 19707 / BCRC 17464 / JCM 30415 / NCIMB 11848 / C-107).